The primary structure comprises 108 residues: Thioredoxin (108 aa).

In terms of domain architecture, Thioredoxin spans 2 to 108 (SDAILYVSDD…QLTAFLDSQL (107 aa)). Cysteine 33 and cysteine 36 are joined by a disulfide.

It belongs to the thioredoxin family.

Functionally, component of the thioredoxin-thioredoxin reductase system. Participates in various redox reactions through the reversible oxidation of its active center dithiol to a disulfide and catalyzes dithiol-disulfide exchange reactions. In Acidithiobacillus ferridurans, this protein is Thioredoxin (trxA).